The primary structure comprises 299 residues: MKEIVEQNIFNEDLSQLLYSFIDSKETFSFAESTILHYVVFGGENLDVATRLGAGIEILILSSDIMDDLEDEDNHHALWMKINRSESLNAALSLYTVGLTSIYSLNNNPLIFKYVLKYVNEAMQGQHDDITNKSKTEDESLEVIRLKCGSLIALANVAGVLLATGEYNETVERYSYYKGIIAQISGDYYVLLSGNRSDIEKNKHTLIYLYLKRLFNDASEDLLYLISHKDLYYKSLLDKEKFQEKLIKAGVTQYISVLLEIYKQKCISAIEQLNLDKEKKELIKECLLSYTKGDTRCKT.

Mg(2+)-binding residues include Asp67 and Asp71.

The protein belongs to the FPP/GGPP synthase family. The cofactor is Mg(2+).

The protein localises to the cell membrane. It carries out the reaction L-tryptophyl-[protein] + (2E,6E)-farnesyl diphosphate = (2S,3R)-3-farnesyl-2,3-dihydro-2,N(alpha)-cyclo-L-tryptophyl-[protein] + diphosphate. In terms of biological role, part of a major quorum-sensing system that regulates the development of genetic competence. Involved in the maturation of the competence pheromone ComX. Acts by catalyzing the transfer of a farnesyl group on the ComX pheromone. Shows weak geranylation activity with geranyl diphosphate (GPP). This is Tryptophan prenyltransferase ComQ from Bacillus subtilis (strain 168).